Consider the following 295-residue polypeptide: Protein SSO2 (295 aa).

Residues 1–269 (MSNANPYENN…ARKARKNKIR (269 aa)) are Cytoplasmic-facing. 2 positions are modified to phosphoserine: serine 31 and serine 34. Residues 39–100 (AFMNKINSIN…ATDLQYQLKA (62 aa)) adopt a coiled-coil conformation. In terms of domain architecture, t-SNARE coiled-coil homology spans 194–256 (LAEVQARHQE…EQGVGHTNKA (63 aa)). A helical; Anchor for type IV membrane protein membrane pass occupies residues 270 to 291 (CLIICFIIFAIVVVVVVVPSVV). Topologically, residues 292–295 (ETRK) are extracellular.

The protein belongs to the syntaxin family.

The protein localises to the membrane. Its function is as follows. Required for vesicle fusion with the plasma membrane. In Saccharomyces cerevisiae (strain ATCC 204508 / S288c) (Baker's yeast), this protein is Protein SSO2 (SSO2).